Consider the following 251-residue polypeptide: Geranylgeranylglyceryl phosphate synthase (251 aa).

Mg(2+)-binding residues include aspartate 25 and serine 54. Residues 173–179 (YLEAGSG), 204–205 (GG), and 226–227 (GT) contribute to the sn-glycerol 1-phosphate site.

This sequence belongs to the GGGP/HepGP synthase family. Group II subfamily. The cofactor is Mg(2+).

The protein resides in the cytoplasm. It carries out the reaction sn-glycerol 1-phosphate + (2E,6E,10E)-geranylgeranyl diphosphate = sn-3-O-(geranylgeranyl)glycerol 1-phosphate + diphosphate. The protein operates within membrane lipid metabolism; glycerophospholipid metabolism. Prenyltransferase that catalyzes the transfer of the geranylgeranyl moiety of geranylgeranyl diphosphate (GGPP) to the C3 hydroxyl of sn-glycerol-1-phosphate (G1P). This reaction is the first ether-bond-formation step in the biosynthesis of archaeal membrane lipids. This is Geranylgeranylglyceryl phosphate synthase from Pyrococcus furiosus (strain ATCC 43587 / DSM 3638 / JCM 8422 / Vc1).